Reading from the N-terminus, the 710-residue chain is Denticleless protein homolog A (710 aa).

WD repeat units follow at residues 47–89 (GMPV…MQRL), 96–135 (AHTN…LIGE), and 138–178 (GHQC…KDGF). The DDB1-binding motif signature appears at 168-171 (WDTR). A Nuclear localization signal motif is present at residues 197 to 204 (PSKMKKRK). WD repeat units lie at residues 215–254 (DSQQ…SAYR), 270–309 (TRKL…TDPV), 314–355 (GHQN…AAPV), and 359–398 (GHCQ…CEDS). Residues 244-247 (WDLR) carry the DDB1-binding motif motif. 2 disordered regions span residues 428–534 (GKPS…VSSA) and 652–698 (ALGH…PGSM). Residues 430-450 (PSVMSSSSLTSSPTPASCAPS) show a composition bias toward low complexity. Polar residues-rich tracts occupy residues 504–516 (TPKS…TKTP) and 659–690 (SSPQ…SPVS).

It belongs to the WD repeat cdt2 family. As to quaternary structure, component of the DCX(DTL) E3 ubiquitin ligase complex, at least composed of cul4 (cul4a or cul4b), ddb1, dtl/cdt2 and rbx1.

It localises to the nucleus. It is found in the cytoplasm. The protein resides in the cytoskeleton. Its subcellular location is the microtubule organizing center. The protein localises to the centrosome. It localises to the chromosome. It functions in the pathway protein modification; protein ubiquitination. Its function is as follows. Substrate-specific adapter of a DCX (DDB1-CUL4-X-box) E3 ubiquitin-protein ligase complex required for cell cycle control, DNA damage response and translesion DNA synthesis. The DCX(DTL) complex, also named CRL4(CDT2) complex, mediates the polyubiquitination and subsequent degradation of CDT1, CDKN1A/p21(CIP1), KMT5A and SDE2. CDT1 degradation in response to DNA damage is necessary to ensure proper cell cycle regulation of DNA replication. CDKN1A/p21(CIP1) degradation during S phase or following UV irradiation is essential to control replication licensing. KMT5A degradation is also important for a proper regulation of mechanisms such as TGF-beta signaling, cell cycle progression, DNA repair and cell migration. Most substrates require their interaction with PCNA for their polyubiquitination: substrates interact with PCNA via their PIP-box, and those containing the 'K+4' motif in the PIP box, recruit the DCX(DTL) complex, leading to their degradation. In undamaged proliferating cells, the DCX(DTL) complex also promotes the 'Lys-164' monoubiquitination of PCNA, thereby being involved in PCNA-dependent translesion DNA synthesis. May play a role in the regulation of the circadian clock. In Xenopus laevis (African clawed frog), this protein is Denticleless protein homolog A (dtl-a).